A 411-amino-acid chain; its full sequence is Receptor GIN3 (411 aa).

The Extracellular portion of the chain corresponds to 1–99 (MSGFVAGEEA…LLPILPHPRN (99 aa)). The chain crosses the membrane as a helical span at residues 100–120 (IPIIVPLFCVFTVMTSLAVGL). The Cytoplasmic portion of the chain corresponds to 121–134 (RLWSRQKVAGGIRS). Residues 135–155 (FDWLALAGFGLTIIYGAVSVY) form a helical membrane-spanning segment. At 156-181 (HSKVSGPYQAFYDRTWDQMKENYKVY) the chain is on the extracellular side. A helical transmembrane segment spans residues 182–202 (LVLTIMYPFIMGLIKISLLLF). The Cytoplasmic portion of the chain corresponds to 203-227 (YYRVATLNYVQWAVYATGSLTIANS). Residues 228–248 (IAAIITHCLAFMPIDFWNHFL) traverse the membrane as a helical segment. Topologically, residues 249–262 (QSPFKFNSRTPMLV) are extracellular. Residues 263–283 (FGAVYILTDVAILIIPMPMVF) traverse the membrane as a helical segment. The Cytoplasmic segment spans residues 284–292 (QLKLYPREK). The chain crosses the membrane as a helical span at residues 293-313 (VIAVIAFSLGGVACVASGFRI). At 314–328 (WAIDEFQNYSGKNSS) the chain is on the extracellular side. Asparagine 321 and asparagine 326 each carry an N-linked (GlcNAc...) asparagine glycan. The helical transmembrane segment at 329–349 (GLMIDAWTMIELNLTLICASA) threads the bilayer. At 350–411 (PAIRALAIHY…QSPVIPKEVV (62 aa)) the chain is on the cytoplasmic side. The tract at residues 371–411 (FSSSGATRGSKSAGSSGKSKTPESEKSMQVSQSPVIPKEVV) is disordered. Residues 372–389 (SSSGATRGSKSAGSSGKS) show a composition bias toward low complexity.

The protein belongs to the SAT4 family. Interacts with guanine nucleotide-binding protein alpha GPA2; to activate adenylate cyclase and positively regulate nematode trap formation.

The protein localises to the cell membrane. Functionally, receptor that senses nematode-derived signals at the cell surface and signals via adenylate cyclase to positively regulate trap formation for nematode capture. The protein is Receptor GIN3 of Arthrobotrys oligospora (strain ATCC 24927 / CBS 115.81 / DSM 1491) (Nematode-trapping fungus).